We begin with the raw amino-acid sequence, 343 residues long: Protein RecA (343 aa).

ATP is bound at residue 65-72; that stretch reads GPESSGKT.

Belongs to the RecA family.

It is found in the cytoplasm. Its function is as follows. Can catalyze the hydrolysis of ATP in the presence of single-stranded DNA, the ATP-dependent uptake of single-stranded DNA by duplex DNA, and the ATP-dependent hybridization of homologous single-stranded DNAs. It interacts with LexA causing its activation and leading to its autocatalytic cleavage. The sequence is that of Protein RecA from Pseudoalteromonas atlantica (strain T6c / ATCC BAA-1087).